The following is a 572-amino-acid chain: Sulfite reductase [NADPH] hemoprotein beta-component (572 aa).

[4Fe-4S] cluster-binding residues include Cys-437, Cys-443, Cys-482, and Cys-486. Cys-486 contacts siroheme.

The protein belongs to the nitrite and sulfite reductase 4Fe-4S domain family. Alpha(8)-beta(8). The alpha component is a flavoprotein, the beta component is a hemoprotein. It depends on siroheme as a cofactor. Requires [4Fe-4S] cluster as cofactor.

The catalysed reaction is hydrogen sulfide + 3 NADP(+) + 3 H2O = sulfite + 3 NADPH + 4 H(+). The protein operates within sulfur metabolism; hydrogen sulfide biosynthesis; hydrogen sulfide from sulfite (NADPH route): step 1/1. Its function is as follows. Component of the sulfite reductase complex that catalyzes the 6-electron reduction of sulfite to sulfide. This is one of several activities required for the biosynthesis of L-cysteine from sulfate. This is Sulfite reductase [NADPH] hemoprotein beta-component from Lysinibacillus sphaericus (strain C3-41).